A 241-amino-acid polypeptide reads, in one-letter code: MQGLKSAISFFTIIPVKADLNKNIVFFFTITGAITGLMAASIFYLTSFINQLLASVASVSFLIIIYGFNHADAVLDLGDTFMVHDPEKKKIIIKDVYHGTGSVVTFFIIYIITISLLSSFNSIQGSIALILSETISRFSMLMSMYKSNSFSGGISEIFISYFDKPFKITFFNFLVIILIFLIFYKYIIFTMFSLISIVISYYFKSHEQKIFNGINGDIIGFTGELSRLISLLLILISFKLI.

The next 5 helical transmembrane spans lie at 24 to 44 (IVFFFTITGAITGLMAASIFY), 48 to 68 (FINQLLASVASVSFLIIIYGF), 103 to 123 (VVTFFIIYIITISLLSSFNSI), 175 to 195 (VIILIFLIFYKYIIFTMFSLI), and 218 to 238 (IIGFTGELSRLISLLLILISF).

This sequence belongs to the CobS family. Mg(2+) is required as a cofactor.

It localises to the cell membrane. It catalyses the reaction alpha-ribazole + adenosylcob(III)inamide-GDP = adenosylcob(III)alamin + GMP + H(+). The enzyme catalyses alpha-ribazole 5'-phosphate + adenosylcob(III)inamide-GDP = adenosylcob(III)alamin 5'-phosphate + GMP + H(+). It participates in cofactor biosynthesis; adenosylcobalamin biosynthesis; adenosylcobalamin from cob(II)yrinate a,c-diamide: step 7/7. Functionally, joins adenosylcobinamide-GDP and alpha-ribazole to generate adenosylcobalamin (Ado-cobalamin). Also synthesizes adenosylcobalamin 5'-phosphate from adenosylcobinamide-GDP and alpha-ribazole 5'-phosphate. The sequence is that of Adenosylcobinamide-GDP ribazoletransferase from Picrophilus torridus (strain ATCC 700027 / DSM 9790 / JCM 10055 / NBRC 100828 / KAW 2/3).